We begin with the raw amino-acid sequence, 661 residues long: Peroxisomal acyl-coenzyme A oxidase 1 (661 aa).

At serine 26 the chain carries Phosphoserine. Lysine 65 is modified (N6-acetyllysine). At lysine 89 the chain carries N6-succinyllysine. Position 139 (threonine 139) interacts with FAD. Lysine 159 carries the post-translational modification N6-succinyllysine. Glycine 178 lines the FAD pocket. Position 216 is an N6-acetyllysine (lysine 216). Lysine 241 bears the N6-succinyllysine mark. N6-acetyllysine occurs at positions 255, 267, and 272. Position 349 is an N6-succinyllysine (lysine 349). Glutamate 421 functions as the Proton acceptor in the catalytic mechanism. 2 positions are modified to N6-acetyllysine; alternate: lysine 437 and lysine 446. N6-succinyllysine; alternate occurs at positions 437 and 446. Lysine 500 bears the N6-acetyllysine mark. Lysine 512 carries the N6-acetyllysine; alternate modification. An N6-succinyllysine; alternate modification is found at lysine 512. At lysine 542 the chain carries N6-succinyllysine. The residue at position 637 (lysine 637) is an N6-acetyllysine; alternate. N6-succinyllysine; alternate is present on lysine 637. The residue at position 643 (lysine 643) is an N6-succinyllysine. Residue serine 649 is modified to Phosphoserine. Lysine 652 carries the N6-acetyllysine modification. Position 655 is an N6-succinyllysine (lysine 655). A Microbody targeting signal motif is present at residues 659–661; it reads SKL.

It belongs to the acyl-CoA oxidase family. In terms of assembly, homodimer. Interacts with LONP2. The cofactor is FAD.

The protein resides in the peroxisome. The enzyme catalyses a 2,3-saturated acyl-CoA + O2 = a (2E)-enoyl-CoA + H2O2. It catalyses the reaction hexadecanoyl-CoA + O2 = (2E)-hexadecenoyl-CoA + H2O2. It carries out the reaction dodecanoyl-CoA + O2 = (2E)-dodecenoyl-CoA + H2O2. The catalysed reaction is octanoyl-CoA + O2 = (2E)-octenoyl-CoA + H2O2. The enzyme catalyses decanoyl-CoA + O2 = (2E)-decenoyl-CoA + H2O2. It catalyses the reaction tetradecanoyl-CoA + O2 = (2E)-tetradecenoyl-CoA + H2O2. It carries out the reaction hexadecanedioyl-CoA + O2 = (2E)-hexadecenedioyl-CoA + H2O2. The catalysed reaction is tetracosanoyl-CoA + O2 = (2E)-tetracosenoyl-CoA + H2O2. The enzyme catalyses glutaryl-CoA + O2 = (2E)-glutaconyl-CoA + H2O2. It catalyses the reaction hexanoyl-CoA + O2 = (2E)-hexenoyl-CoA + H2O2. It carries out the reaction octadecanoyl-CoA + O2 = (2E)-octadecenoyl-CoA + H2O2. The catalysed reaction is (5Z,8Z,11Z,14Z,17Z)-eicosapentaenoyl-CoA + O2 = (2E,5Z,8Z,11Z,14Z,17Z)-icosahexaenoyl-CoA + H2O2. The enzyme catalyses (6Z,9Z,12Z,15Z,18Z,21Z)-tetracosahexaenoyl-CoA + O2 = (2E,6Z,9Z,12Z,15Z,18Z,21Z)-tetracosaheptaenoyl-CoA + H2O2. It participates in lipid metabolism; peroxisomal fatty acid beta-oxidation. Its function is as follows. Involved in the initial and rate-limiting step of peroxisomal beta-oxidation of straight-chain saturated and unsaturated very-long-chain fatty acids. Catalyzes the desaturation of fatty acyl-CoAs such as palmitoyl-CoA (hexadecanoyl-CoA) to 2-trans-enoyl-CoAs ((2E)-enoyl-CoAs) such as (2E)-hexadecenoyl-CoA, and donates electrons directly to molecular oxygen (O(2)), thereby producing hydrogen peroxide (H(2)O(2)). In Cavia porcellus (Guinea pig), this protein is Peroxisomal acyl-coenzyme A oxidase 1.